A 115-amino-acid polypeptide reads, in one-letter code: Tyrosine-protein phosphatase 22 (115 aa).

The Tyrosine-protein phosphatase domain occupies 1–115 (WLMIVEQKCR…ETGGDAPMVV (115 aa)). Residue D83 participates in substrate binding.

It belongs to the protein-tyrosine phosphatase family.

The catalysed reaction is O-phospho-L-tyrosyl-[protein] + H2O = L-tyrosyl-[protein] + phosphate. The polypeptide is Tyrosine-protein phosphatase 22 (STY-22) (Styela plicata (Wrinkled sea squirt)).